Reading from the N-terminus, the 185-residue chain is Thymidine kinase (185 aa).

17–24 contributes to the ATP binding site; the sequence is GPMFAGKT. Catalysis depends on glutamate 92, which acts as the Proton acceptor. Substrate is bound at residue phenylalanine 121. Positions 146 and 149 each coordinate Zn(2+). 166–170 lines the substrate pocket; the sequence is LILAG. Zn(2+) contacts are provided by cysteine 179 and cysteine 182.

It belongs to the thymidine kinase family.

The catalysed reaction is thymidine + ATP = dTMP + ADP + H(+). Its function is as follows. Phosphorylates thymidine. ASFV replicates in the cytoplasm of infected cells and contains genes encoding a number of enzymes needed for DNA synthesis, including thymidine kinase. Important for growth in swine macrophages in vitro and is a virus virulence factor in swine. This is Thymidine kinase from African swine fever virus (isolate Pig/Kenya/KEN-50/1950) (ASFV).